Reading from the N-terminus, the 63-residue chain is Bowman-birk type proteinase inhibitor 2 (63 aa).

7 disulfide bridges follow: Cys-7-Cys-61, Cys-8-Cys-23, Cys-11-Cys-57, Cys-13-Cys-21, Cys-31-Cys-38, Cys-35-Cys-50, and Cys-40-Cys-48.

The protein belongs to the Bowman-Birk serine protease inhibitor family. In terms of assembly, exists as a dimer in its native form.

Its function is as follows. Inhibits trypsin, chymotrypsin, plasmin and factor XIIa. Does not inhibit factor Xa, thrombin, human plasma kallikrein, porcine pancreatic kallikrein and human urinary kallikrein. The sequence is that of Bowman-birk type proteinase inhibitor 2 from Amburana cearensis (Cerejeira).